The primary structure comprises 141 residues: Transmembrane protein 216 (141 aa).

Helical transmembrane passes span 15 to 35 (ILFF…LLIF), 49 to 69 (LVLD…RLFF), 82 to 102 (LGIS…YLLL), and 115 to 135 (SILL…LATF).

Part of the tectonic-like complex (also named B9 complex). Interacts with TMEM107.

It localises to the membrane. It is found in the cytoplasm. The protein localises to the cytoskeleton. The protein resides in the cilium basal body. In terms of biological role, part of the tectonic-like complex which is required for tissue-specific ciliogenesis and may regulate ciliary membrane composition. The chain is Transmembrane protein 216 (Tmem216) from Rattus norvegicus (Rat).